The primary structure comprises 282 residues: Thiazole synthase (282 aa).

The active-site Schiff-base intermediate with DXP is Lys113. Residues Gly174, 201-202 (AG), and 223-224 (NT) contribute to the 1-deoxy-D-xylulose 5-phosphate site.

It belongs to the ThiG family. In terms of assembly, homotetramer. Forms heterodimers with either ThiH or ThiS.

The protein resides in the cytoplasm. It carries out the reaction [ThiS sulfur-carrier protein]-C-terminal-Gly-aminoethanethioate + 2-iminoacetate + 1-deoxy-D-xylulose 5-phosphate = [ThiS sulfur-carrier protein]-C-terminal Gly-Gly + 2-[(2R,5Z)-2-carboxy-4-methylthiazol-5(2H)-ylidene]ethyl phosphate + 2 H2O + H(+). It functions in the pathway cofactor biosynthesis; thiamine diphosphate biosynthesis. Functionally, catalyzes the rearrangement of 1-deoxy-D-xylulose 5-phosphate (DXP) to produce the thiazole phosphate moiety of thiamine. Sulfur is provided by the thiocarboxylate moiety of the carrier protein ThiS. In vitro, sulfur can be provided by H(2)S. The protein is Thiazole synthase of Cupriavidus metallidurans (strain ATCC 43123 / DSM 2839 / NBRC 102507 / CH34) (Ralstonia metallidurans).